Consider the following 771-residue polypeptide: UPF0313 protein PSPTO_4928 (771 aa).

A Radical SAM core domain is found at 371–649 (AYDMIRFSVN…KAFLRYHDPK (279 aa)). 3 residues coordinate [4Fe-4S] cluster: cysteine 385, cysteine 389, and cysteine 392. A disordered region spans residues 683–771 (DTYQSARRKN…KPARKPVVPR (89 aa)). 2 stretches are compositionally biased toward basic and acidic residues: residues 726–735 (KPWDKREEAK) and 745–754 (AAKERMDAAK). The span at 756 to 765 (GKGKGGKPAR) shows a compositional bias: basic residues.

It belongs to the UPF0313 family. The cofactor is [4Fe-4S] cluster.

In Pseudomonas syringae pv. tomato (strain ATCC BAA-871 / DC3000), this protein is UPF0313 protein PSPTO_4928.